Here is a 286-residue protein sequence, read N- to C-terminus: 2-oxoglutarate synthase subunit KorB (286 aa).

In terms of assembly, heterotetramer of the KorA, KorB, KorC and KorD subunits.

The enzyme catalyses 2 oxidized [2Fe-2S]-[ferredoxin] + 2-oxoglutarate + CoA = succinyl-CoA + 2 reduced [2Fe-2S]-[ferredoxin] + CO2 + H(+). This chain is 2-oxoglutarate synthase subunit KorB (korB), found in Methanothermobacter thermautotrophicus (strain ATCC 29096 / DSM 1053 / JCM 10044 / NBRC 100330 / Delta H) (Methanobacterium thermoautotrophicum).